Reading from the N-terminus, the 463-residue chain is Heterogeneous nuclear ribonucleoprotein K (463 aa).

An N-acetylmethionine modification is found at Met1. Residues 1 to 37 are disordered; sequence METEQPEETFPNTETNGEFGKRPAEDMEEEQAFKRSR. Residues 1–276 form a necessary for interaction with DDX1 region; sequence METEQPEETF…GRGGRPMPPS (276 aa). Basic and acidic residues predominate over residues 19–37; the sequence is FGKRPAEDMEEEQAFKRSR. Lys34 carries the N6-acetyllysine; alternate modification. Lys34 participates in a covalent cross-link: Glycyl lysine isopeptide (Lys-Gly) (interchain with G-Cter in SUMO1); alternate. Residue Lys34 forms a Glycyl lysine isopeptide (Lys-Gly) (interchain with G-Cter in SUMO2); alternate linkage. Ser36 is modified (phosphoserine). At Thr39 the chain carries Phosphothreonine. The KH 1 domain maps to 42-104; the sequence is MVELRILLQS…ETIGEILKKI (63 aa). Glycyl lysine isopeptide (Lys-Gly) (interchain with G-Cter in SUMO2) cross-links involve residues Lys52 and Lys60. 2 tandem repeats follow at residues 54-76 and 59-62. Residues 54 to 421 form a 2 X 22 AA approximate repeats region; that stretch reads AGAVIGKGGK…QIRHESGASI (368 aa). The segment at 59–407 is 5 X 4 AA repeats of G-X-G-G; that stretch reads GKGGKNIKAL…LAGSIIGKGG (349 aa). 2 positions are modified to phosphoserine: Ser75 and Ser116. One can recognise a KH 2 domain in the interval 144–209; it reads DCELRLLIHQ…DRVVECIKII (66 aa). Residue Lys163 forms a Glycyl lysine isopeptide (Lys-Gly) (interchain with G-Cter in SUMO1); alternate linkage. Lys163 is covalently cross-linked (Glycyl lysine isopeptide (Lys-Gly) (interchain with G-Cter in SUMO2); alternate). At Lys198 the chain carries N6-acetyllysine. The tract at residues 209–337 is interaction with ZIK1; sequence ILDLISESPI…RPGDRYDGMV (129 aa). Ser214 and Ser216 each carry phosphoserine. Lys219 is covalently cross-linked (Glycyl lysine isopeptide (Lys-Gly) (interchain with G-Cter in SUMO2); alternate). Position 219 is an N6-succinyllysine; alternate (Lys219). The RNA-binding RGG-box stretch occupies residues 236–273; that stretch reads YGGFTMMFDDRRGRPVGFPMRGRGGFDRMPPGRGGRPM. 3 tandem repeats follow at residues 245–250, 257–260, and 267–270. The interval 245–329 is 2 X 6 AA repeats of D-R-R-G-R-P; it reads DRRGRPVGFP…LMAYDRRGRP (85 aa). Residues 250–329 form a disordered region; sequence PVGFPMRGRG…LMAYDRRGRP (80 aa). The segment covering 252–266 has biased composition (low complexity); sequence GFPMRGRGGFDRMPP. A compositionally biased stretch (basic and acidic residues) spans 276–285; the sequence is SRRDYDDMSP. Position 284 is a phosphoserine (Ser284). A 3-4 repeat occupies 295–298; that stretch reads GRGG. The residue at position 316 (Arg316) is an Omega-N-methylarginine. The stretch at 324–329 is one 2-2 repeat; that stretch reads DRRGRP. Arg377 bears the Omega-N-methylarginine mark. Ser379 is subject to Phosphoserine. Tyr380 bears the Phosphotyrosine mark. The KH 3 domain occupies 387–451; that stretch reads IITTQVTIPK…DQIQNAQYLL (65 aa). 2 repeat units span residues 399 to 421 and 404 to 407. The residue at position 405 (Lys405) is an N6-acetyllysine; alternate. Lys405 participates in a covalent cross-link: Glycyl lysine isopeptide (Lys-Gly) (interchain with G-Cter in SUMO2); alternate. Phosphoserine is present on Ser420. Residue Lys422 forms a Glycyl lysine isopeptide (Lys-Gly) (interchain with G-Cter in SUMO1); alternate linkage. Residue Lys422 forms a Glycyl lysine isopeptide (Lys-Gly) (interchain with G-Cter in SUMO2); alternate linkage. Residue Lys422 forms a Glycyl lysine isopeptide (Lys-Gly) (interchain with G-Cter in SUMO); alternate linkage.

Identified in the spliceosome C complex. Interacts with ANKRD28, RBM42 and ZIK1. Interacts with DDX1. Interacts with MDM2; this interaction leads to ubiquitination and proteasomal degradation. Interacts with p53/TP53. Interacts with BRDT. Interacts with IVNS1ABP. Interacts with PPIA/CYPA. Part of a transcription inhibitory ribonucleoprotein complex composed at least of the circular RNA circZNF827, ZNF827 and HNRNPL. Sumoylated by CBX4. Sumoylation is increased upon DNA damage, such as that produced by doxorubicin, etoposide, UV light and camptothecin, due to enhanced CBX4 phosphorylation by HIPK2 under these conditions. In terms of processing, ubiquitinated by MDM2. Doxorubicin treatment does not affect monoubiquitination, but slightly decreases HNRNPK poly-ubiquitination. Post-translationally, O-glycosylated (O-GlcNAcylated), in a cell cycle-dependent manner.

Its subcellular location is the cytoplasm. It is found in the nucleus. It localises to the nucleoplasm. The protein localises to the cell projection. The protein resides in the podosome. Functionally, one of the major pre-mRNA-binding proteins. Binds tenaciously to poly(C) sequences. Likely to play a role in the nuclear metabolism of hnRNAs, particularly for pre-mRNAs that contain cytidine-rich sequences. Can also bind poly(C) single-stranded DNA. Plays an important role in p53/TP53 response to DNA damage, acting at the level of both transcription activation and repression. When sumoylated, acts as a transcriptional coactivator of p53/TP53, playing a role in p21/CDKN1A and 14-3-3 sigma/SFN induction. As far as transcription repression is concerned, acts by interacting with long intergenic RNA p21 (lincRNA-p21), a non-coding RNA induced by p53/TP53. This interaction is necessary for the induction of apoptosis, but not cell cycle arrest. As part of a ribonucleoprotein complex composed at least of ZNF827, HNRNPL and the circular RNA circZNF827 that nucleates the complex on chromatin, may negatively regulate the transcription of genes involved in neuronal differentiation. The sequence is that of Heterogeneous nuclear ribonucleoprotein K (HNRNPK) from Oryctolagus cuniculus (Rabbit).